The chain runs to 149 residues: FAD synthase (149 aa).

Residues 9–10, 14–17, Asn-92, and Tyr-119 each bind ATP; these read TF and HPGH.

Belongs to the archaeal FAD synthase family. As to quaternary structure, homodimer. The cofactor is a divalent metal cation.

It catalyses the reaction FMN + ATP + H(+) = FAD + diphosphate. The protein operates within cofactor biosynthesis; FAD biosynthesis; FAD from FMN: step 1/1. Its function is as follows. Catalyzes the transfer of the AMP portion of ATP to flavin mononucleotide (FMN) to produce flavin adenine dinucleotide (FAD) coenzyme. This is FAD synthase from Methanoculleus marisnigri (strain ATCC 35101 / DSM 1498 / JR1).